The sequence spans 467 residues: Inactive pancreatic lipase-related protein 1 (467 aa).

Residues Met-1–Ala-17 form the signal peptide. 2 disulfides stabilise this stretch: Cys-21/Cys-27 and Cys-109/Cys-120. The N-linked (GlcNAc...) asparagine glycan is linked to Asn-157. Ser-171 serves as the catalytic Nucleophile. Asp-194 functions as the Charge relay system in the catalytic mechanism. Ca(2+) is bound by residues Glu-205, Arg-208, Asp-210, and Asp-213. Cysteines 255 and 279 form a disulfide. His-281 acts as the Charge relay system in catalysis. 3 cysteine pairs are disulfide-bonded: Cys-303–Cys-314, Cys-317–Cys-322, and Cys-451–Cys-467. Positions Trp-356–Cys-467 constitute a PLAT domain.

This sequence belongs to the AB hydrolase superfamily. Lipase family. Detected in pancreas (at protein level).

The protein resides in the secreted. In terms of biological role, may function as inhibitor of dietary triglyceride digestion. Lacks detectable lipase activity towards triglycerides, diglycerides, phosphatidylcholine, galactolipids or cholesterol esters (in vitro). This is Inactive pancreatic lipase-related protein 1 (PNLIPRP1) from Canis lupus familiaris (Dog).